The chain runs to 32 residues: U3-cyrtautoxin-As1a (32 aa).

Intrachain disulfides connect cysteine 4–cysteine 19, cysteine 11–cysteine 24, and cysteine 18–cysteine 29.

This sequence belongs to the neurotoxin 14 (magi-1) family. To aptotoxin III. As to expression, expressed by the venom gland.

It is found in the secreted. Is both paralytic and lethal, when injected into lepidopteran larvae. Is a slower acting toxin, being lethal at 24 hours, but not paralytic at 1 hour post-injection. The sequence is that of U3-cyrtautoxin-As1a from Apomastus schlingeri (Trap-door spider).